A 435-amino-acid chain; its full sequence is Glutamyl-tRNA reductase (435 aa).

Substrate-binding positions include 50-53, serine 110, 115-117, and glutamine 121; these read TCNR and ESQ. Cysteine 51 acts as the Nucleophile in catalysis. Position 191–196 (191–196) interacts with NADP(+); it reads GAGDMG.

Belongs to the glutamyl-tRNA reductase family. In terms of assembly, homodimer.

The enzyme catalyses (S)-4-amino-5-oxopentanoate + tRNA(Glu) + NADP(+) = L-glutamyl-tRNA(Glu) + NADPH + H(+). Its pathway is porphyrin-containing compound metabolism; protoporphyrin-IX biosynthesis; 5-aminolevulinate from L-glutamyl-tRNA(Glu): step 1/2. Its function is as follows. Catalyzes the NADPH-dependent reduction of glutamyl-tRNA(Glu) to glutamate 1-semialdehyde (GSA). The polypeptide is Glutamyl-tRNA reductase (Sulfurovum sp. (strain NBC37-1)).